The following is a 118-amino-acid chain: Deoxynogalonate monooxygenase (118 aa).

The region spanning valine 14–phenylalanine 100 is the ABM domain.

Homodimer.

It catalyses the reaction deoxynogalonate + O2 = nogalonate + H2O + H(+). It functions in the pathway antibiotic biosynthesis. Involved in the biosynthesis of the anthracycline (aromatic polyketide) antibiotic nogalamycin. Catalyzes the oxygenation of 12-deoxy-nogalonic acid at position 12 to yield nogalonic acid. In Streptomyces nogalater, this protein is Deoxynogalonate monooxygenase.